The following is a 468-amino-acid chain: Probable citrate synthase, mitochondrial (468 aa).

Catalysis depends on residues His303, His349, and Asp404.

The protein belongs to the citrate synthase family. As to quaternary structure, homodimer.

Its subcellular location is the mitochondrion matrix. It catalyses the reaction oxaloacetate + acetyl-CoA + H2O = citrate + CoA + H(+). It participates in carbohydrate metabolism; tricarboxylic acid cycle; isocitrate from oxaloacetate: step 1/2. This Caenorhabditis briggsae protein is Probable citrate synthase, mitochondrial (cts-1).